The primary structure comprises 317 residues: Gamma-glutamyl hydrolase (317 aa).

The signal sequence occupies residues 1-24; it reads MASLGRLLCAWVLLLCGLASPGLS. In terms of domain architecture, Gamma-glutamyl hydrolase spans 25–317; it reads GSYERGSKRP…SSFQQAYMFN (293 aa). Asparagine 46 and asparagine 100 each carry an N-linked (GlcNAc...) asparagine glycan. Residue cysteine 133 is the Nucleophile of the active site. Asparagine 153, asparagine 162, asparagine 188, and asparagine 202 each carry an N-linked (GlcNAc...) asparagine glycan. The active-site Proton donor is the histidine 243. N-linked (GlcNAc...) asparagine glycosylation is present at asparagine 306.

The protein belongs to the peptidase C26 family. As to quaternary structure, homodimer.

It localises to the secreted. Its subcellular location is the extracellular space. The protein resides in the lysosome. The protein localises to the melanosome. It carries out the reaction (6S)-5,6,7,8-tetrahydrofolyl-(gamma-L-Glu)(n) + (n-1) H2O = (6S)-5,6,7,8-tetrahydrofolate + (n-1) L-glutamate. With respect to regulation, activity is altered by insulin and estrogen. Functionally, hydrolyzes the polyglutamate sidechains of pteroylpolyglutamates. Progressively removes gamma-glutamyl residues from pteroylpoly-gamma-glutamate to yield pteroyl-alpha-glutamate (folic acid) and free glutamate. May play an important role in the bioavailability of dietary pteroylpolyglutamates and in the metabolism of pteroylpolyglutamates and antifolates. Exhibits either endo- or exopeptidase activity depending upon the tissue of origin. When secreted, it acts primarily as an endopeptidase. This Rattus norvegicus (Rat) protein is Gamma-glutamyl hydrolase (Ggh).